Here is a 103-residue protein sequence, read N- to C-terminus: N(4)-acetylcytidine amidohydrolase (103 aa).

One can recognise an ASCH domain in the interval 6-101; it reads ITFFQRFQDD…QTQFYVIEFK (96 aa). The Proton acceptor role is filled by Lys-21. Thr-24 acts as the Nucleophile in catalysis. The Proton donor role is filled by Glu-74.

This sequence belongs to the N(4)-acetylcytidine amidohydrolase family.

The enzyme catalyses N(4)-acetylcytidine + H2O = cytidine + acetate + H(+). The catalysed reaction is N(4)-acetyl-2'-deoxycytidine + H2O = 2'-deoxycytidine + acetate + H(+). It catalyses the reaction N(4)-acetylcytosine + H2O = cytosine + acetate + H(+). Functionally, catalyzes the hydrolysis of N(4)-acetylcytidine (ac4C). The polypeptide is N(4)-acetylcytidine amidohydrolase (yqfB) (Escherichia coli O127:H6 (strain E2348/69 / EPEC)).